The sequence spans 318 residues: HPr kinase/phosphorylase (318 aa).

Active-site residues include His146 and Lys167. 161-168 (GESGLGKS) lines the ATP pocket. Ser168 contributes to the Mg(2+) binding site. Asp185 acts as the Proton acceptor; for phosphorylation activity. Proton donor; for dephosphorylation activity in catalysis. The important for the catalytic mechanism of both phosphorylation and dephosphorylation stretch occupies residues 209-218 (LEVRGIGLLD). Glu210 contributes to the Mg(2+) binding site. Residue Arg252 is part of the active site. The segment at 273–278 (QVVAGR) is important for the catalytic mechanism of dephosphorylation.

Belongs to the HPrK/P family. As to quaternary structure, homohexamer. It depends on Mg(2+) as a cofactor.

The enzyme catalyses [HPr protein]-L-serine + ATP = [HPr protein]-O-phospho-L-serine + ADP + H(+). The catalysed reaction is [HPr protein]-O-phospho-L-serine + phosphate + H(+) = [HPr protein]-L-serine + diphosphate. Its function is as follows. Catalyzes the ATP- as well as the pyrophosphate-dependent phosphorylation of a specific serine residue in HPr, a phosphocarrier protein of the phosphoenolpyruvate-dependent sugar phosphotransferase system (PTS). HprK/P also catalyzes the pyrophosphate-producing, inorganic phosphate-dependent dephosphorylation (phosphorolysis) of seryl-phosphorylated HPr (P-Ser-HPr). The sequence is that of HPr kinase/phosphorylase from Verminephrobacter eiseniae (strain EF01-2).